The sequence spans 76 residues: MPHIDVKFFPRDLSDAQQQALADELTQVIVKHLQSKESSVSVALKEVQPEQWKSEVWDTEIAPQLDTLARKPGYEM.

The active-site Proton acceptor; via imino nitrogen is the P2.

Belongs to the 4-oxalocrotonate tautomerase family. PptA subfamily. In terms of assembly, homodimer.

Its subcellular location is the cytoplasm. The sequence is that of Tautomerase PptA from Cronobacter sakazakii (strain ATCC BAA-894) (Enterobacter sakazakii).